The following is a 367-amino-acid chain: Glutamate 5-kinase (367 aa).

Lysine 10 provides a ligand contact to ATP. Substrate is bound by residues serine 50, aspartate 137, and asparagine 149. Residues threonine 169–aspartate 170 and threonine 211–lysine 217 each bind ATP. Residues alanine 275–glutamate 353 form the PUA domain.

Belongs to the glutamate 5-kinase family.

The protein resides in the cytoplasm. It catalyses the reaction L-glutamate + ATP = L-glutamyl 5-phosphate + ADP. The protein operates within amino-acid biosynthesis; L-proline biosynthesis; L-glutamate 5-semialdehyde from L-glutamate: step 1/2. In terms of biological role, catalyzes the transfer of a phosphate group to glutamate to form L-glutamate 5-phosphate. The protein is Glutamate 5-kinase of Pasteurella multocida (strain Pm70).